A 300-amino-acid polypeptide reads, in one-letter code: NAD kinase (300 aa).

The Proton acceptor role is filled by aspartate 75. Residues 75 to 76 (DG), 149 to 150 (ND), arginine 177, aspartate 179, 190 to 195 (TAYALS), alanine 214, and glutamine 248 contribute to the NAD(+) site.

It belongs to the NAD kinase family. A divalent metal cation serves as cofactor.

The protein localises to the cytoplasm. The enzyme catalyses NAD(+) + ATP = ADP + NADP(+) + H(+). Functionally, involved in the regulation of the intracellular balance of NAD and NADP, and is a key enzyme in the biosynthesis of NADP. Catalyzes specifically the phosphorylation on 2'-hydroxyl of the adenosine moiety of NAD to yield NADP. This Burkholderia vietnamiensis (strain G4 / LMG 22486) (Burkholderia cepacia (strain R1808)) protein is NAD kinase.